The primary structure comprises 1177 residues: Lon protease homolog, mitochondrial (1177 aa).

Disordered regions lie at residues 72-197 (RTNS…KSPA) and 353-386 (AKKAKSGKTEDSKHDSKVTSKDGKETTEKYDSST). The span at 103-150 (RGRELWVQEKDKSDKPEKSDKPDKTDKTDKDKPEKQDKDKTDKPEKTK) shows a compositional bias: basic and acidic residues. Residues 154 to 182 (TPSSTASTGAGEAAAPPSAPPSGSGSSSS) are compositionally biased toward low complexity. Residues 203-505 (ILAVPISDRP…RALILLKREH (303 aa)) enclose the Lon N-terminal domain. Over residues 353–383 (AKKAKSGKTEDSKHDSKVTSKDGKETTEKYD) the composition is skewed to basic and acidic residues. 657-664 (GPPGVGKT) contacts ATP. Residues 883–916 (EKDKESAEKKTTKSKSKEVNEEPAAKEEKDKATE) are compositionally biased toward basic and acidic residues. The interval 883 to 932 (EKDKESAEKKTTKSKSKEVNEEPAAKEEKDKATESAESSETKVGTKAPPV) is disordered. The Lon proteolytic domain occupies 964–1150 (DPPPGVVMGL…QDVYDVVFQG (187 aa)). Catalysis depends on residues serine 1056 and lysine 1099.

It belongs to the peptidase S16 family. Homohexamer or homoheptamer. Organized in a ring with a central cavity.

The protein localises to the mitochondrion matrix. The enzyme catalyses Hydrolysis of proteins in presence of ATP.. Functionally, ATP-dependent serine protease that mediates the selective degradation of misfolded, unassembled or oxidatively damaged polypeptides as well as certain short-lived regulatory proteins in the mitochondrial matrix. May also have a chaperone function in the assembly of inner membrane protein complexes. Participates in the regulation of mitochondrial gene expression and in the maintenance of the integrity of the mitochondrial genome. Binds to mitochondrial DNA in a site-specific manner. This Yarrowia lipolytica (strain CLIB 122 / E 150) (Yeast) protein is Lon protease homolog, mitochondrial.